A 184-amino-acid chain; its full sequence is Ribosome-recycling factor (184 aa).

The segment at 141–161 (KKNDKAISEDDQRKGQDDVQK) is disordered.

This sequence belongs to the RRF family.

Its subcellular location is the cytoplasm. In terms of biological role, responsible for the release of ribosomes from messenger RNA at the termination of protein biosynthesis. May increase the efficiency of translation by recycling ribosomes from one round of translation to another. In Solidesulfovibrio magneticus (strain ATCC 700980 / DSM 13731 / RS-1) (Desulfovibrio magneticus), this protein is Ribosome-recycling factor.